Consider the following 357-residue polypeptide: tRNA N6-adenosine threonylcarbamoyltransferase (357 aa).

Fe cation contacts are provided by His-116 and His-120. Residues 139-143, Asp-172, Gly-185, and Asn-284 contribute to the substrate site; that span reads LVSGG. Position 312 (Asp-312) interacts with Fe cation.

This sequence belongs to the KAE1 / TsaD family. Fe(2+) is required as a cofactor.

It localises to the cytoplasm. The catalysed reaction is L-threonylcarbamoyladenylate + adenosine(37) in tRNA = N(6)-L-threonylcarbamoyladenosine(37) in tRNA + AMP + H(+). Required for the formation of a threonylcarbamoyl group on adenosine at position 37 (t(6)A37) in tRNAs that read codons beginning with adenine. Is involved in the transfer of the threonylcarbamoyl moiety of threonylcarbamoyl-AMP (TC-AMP) to the N6 group of A37, together with TsaE and TsaB. TsaD likely plays a direct catalytic role in this reaction. This Synechococcus sp. (strain CC9605) protein is tRNA N6-adenosine threonylcarbamoyltransferase.